A 270-amino-acid chain; its full sequence is Putative pyruvate, phosphate dikinase regulatory protein 1 (270 aa).

Residue 151 to 158 (GVSRTSKT) participates in ADP binding.

Belongs to the pyruvate, phosphate/water dikinase regulatory protein family. PDRP subfamily.

The catalysed reaction is N(tele)-phospho-L-histidyl/L-threonyl-[pyruvate, phosphate dikinase] + ADP = N(tele)-phospho-L-histidyl/O-phospho-L-threonyl-[pyruvate, phosphate dikinase] + AMP + H(+). The enzyme catalyses N(tele)-phospho-L-histidyl/O-phospho-L-threonyl-[pyruvate, phosphate dikinase] + phosphate + H(+) = N(tele)-phospho-L-histidyl/L-threonyl-[pyruvate, phosphate dikinase] + diphosphate. Bifunctional serine/threonine kinase and phosphorylase involved in the regulation of the pyruvate, phosphate dikinase (PPDK) by catalyzing its phosphorylation/dephosphorylation. The sequence is that of Putative pyruvate, phosphate dikinase regulatory protein 1 from Enterococcus faecalis (strain ATCC 700802 / V583).